Here is a 169-residue protein sequence, read N- to C-terminus: MNNLTLSLHRERRLLVLLGLVCLALLAGALYLQYVKNEDPCPLCIIQRYFFVLIAVFAFIGAGMASGAGIAVIEALIVLSAAAGVGTAARHLYVQLNPGFSCGFDALQPVVDSLPPAHWLPGVFKVAGLCETVYPPIFGILLPGWALIAFALIVVPVAASLLRHRGRLR.

Residues 1 to 14 (MNNLTLSLHRERRL) lie on the Cytoplasmic side of the membrane. Residues 15–31 (LVLLGLVCLALLAGALY) form a helical membrane-spanning segment. Over 32-49 (LQYVKNEDPCPLCIIQRY) the chain is Periplasmic. A disulfide bridge connects residues C41 and C44. A helical membrane pass occupies residues 50-64 (FFVLIAVFAFIGAGM). The Cytoplasmic segment spans residues 65–71 (ASGAGIA). The chain crosses the membrane as a helical span at residues 72–89 (VIEALIVLSAAAGVGTAA). Topologically, residues 90-144 (RHLYVQLNPGFSCGFDALQPVVDSLPPAHWLPGVFKVAGLCETVYPPIFGILLPG) are periplasmic. C102 and C130 are joined by a disulfide. Residues 145–163 (WALIAFALIVVPVAASLLR) form a helical membrane-spanning segment. At 164–169 (HRGRLR) the chain is on the cytoplasmic side.

It belongs to the DsbB family.

It localises to the cell inner membrane. Functionally, required for disulfide bond formation in some periplasmic proteins. Acts by oxidizing the DsbA protein. This chain is Disulfide bond formation protein B, found in Burkholderia thailandensis (strain ATCC 700388 / DSM 13276 / CCUG 48851 / CIP 106301 / E264).